The sequence spans 282 residues: Probable endonuclease 4 (282 aa).

Histidine 66, histidine 106, glutamate 143, aspartate 177, histidine 180, histidine 214, aspartate 227, histidine 229, and glutamate 259 together coordinate Zn(2+).

This sequence belongs to the AP endonuclease 2 family. The cofactor is Zn(2+).

It carries out the reaction Endonucleolytic cleavage to 5'-phosphooligonucleotide end-products.. Functionally, endonuclease IV plays a role in DNA repair. It cleaves phosphodiester bonds at apurinic or apyrimidinic (AP) sites, generating a 3'-hydroxyl group and a 5'-terminal sugar phosphate. The sequence is that of Probable endonuclease 4 from Nitratidesulfovibrio vulgaris (strain ATCC 29579 / DSM 644 / CCUG 34227 / NCIMB 8303 / VKM B-1760 / Hildenborough) (Desulfovibrio vulgaris).